The sequence spans 261 residues: Cytochrome c oxidase subunit 3 (261 aa).

The Mitochondrial matrix segment spans residues 1–15 (MSHQAHAYHMVDPSP). Residues 16-34 (WPLTGAGAALLMTSGLAMW) form a helical membrane-spanning segment. Residues 35–40 (FHKNSC) lie on the Mitochondrial intermembrane side of the membrane. Residues 41-66 (ILMTLGLILMLLTMYQWWRDIVREGT) form a helical membrane-spanning segment. The Mitochondrial matrix segment spans residues 67–72 (FLGHHT). The helical transmembrane segment at 73-105 (SPVQQGLRYGMILFIISEVCFFAGFFWAFYHAS) threads the bilayer. Topologically, residues 106–128 (LAPTPELGLTWPPTGINPLNPFE) are mitochondrial intermembrane. Residues 129–152 (VPLLNTAVLLASGVSVTWAHHSIT) form a helical membrane-spanning segment. Over 153-155 (EKN) the chain is Mitochondrial matrix. The helical transmembrane segment at 156–183 (RTETTQALTLTVLLGLYFTALQIMEYYE) threads the bilayer. At 184–190 (TPFTMAD) the chain is on the mitochondrial intermembrane side. Residues 191 to 223 (GVYGSTFFVATGFHGLHVIIGSLFLLTCLLRHL) traverse the membrane as a helical segment. The Mitochondrial matrix portion of the chain corresponds to 224-232 (QYHFTSKHH). The helical transmembrane segment at 233–256 (FGFEAAAWYWHFVDVVWLFLYISI) threads the bilayer. Topologically, residues 257–261 (YWWGS) are mitochondrial intermembrane.

This sequence belongs to the cytochrome c oxidase subunit 3 family. In terms of assembly, component of the cytochrome c oxidase (complex IV, CIV), a multisubunit enzyme composed of 14 subunits. The complex is composed of a catalytic core of 3 subunits MT-CO1, MT-CO2 and MT-CO3, encoded in the mitochondrial DNA, and 11 supernumerary subunits COX4I, COX5A, COX5B, COX6A, COX6B, COX6C, COX7A, COX7B, COX7C, COX8 and NDUFA4, which are encoded in the nuclear genome. The complex exists as a monomer or a dimer and forms supercomplexes (SCs) in the inner mitochondrial membrane with NADH-ubiquinone oxidoreductase (complex I, CI) and ubiquinol-cytochrome c oxidoreductase (cytochrome b-c1 complex, complex III, CIII), resulting in different assemblies (supercomplex SCI(1)III(2)IV(1) and megacomplex MCI(2)III(2)IV(2)).

The protein localises to the mitochondrion inner membrane. It catalyses the reaction 4 Fe(II)-[cytochrome c] + O2 + 8 H(+)(in) = 4 Fe(III)-[cytochrome c] + 2 H2O + 4 H(+)(out). Its function is as follows. Component of the cytochrome c oxidase, the last enzyme in the mitochondrial electron transport chain which drives oxidative phosphorylation. The respiratory chain contains 3 multisubunit complexes succinate dehydrogenase (complex II, CII), ubiquinol-cytochrome c oxidoreductase (cytochrome b-c1 complex, complex III, CIII) and cytochrome c oxidase (complex IV, CIV), that cooperate to transfer electrons derived from NADH and succinate to molecular oxygen, creating an electrochemical gradient over the inner membrane that drives transmembrane transport and the ATP synthase. Cytochrome c oxidase is the component of the respiratory chain that catalyzes the reduction of oxygen to water. Electrons originating from reduced cytochrome c in the intermembrane space (IMS) are transferred via the dinuclear copper A center (CU(A)) of subunit 2 and heme A of subunit 1 to the active site in subunit 1, a binuclear center (BNC) formed by heme A3 and copper B (CU(B)). The BNC reduces molecular oxygen to 2 water molecules using 4 electrons from cytochrome c in the IMS and 4 protons from the mitochondrial matrix. This Petromyzon marinus (Sea lamprey) protein is Cytochrome c oxidase subunit 3 (MT-CO3).